A 228-amino-acid chain; its full sequence is Lipoprotein-releasing system ATP-binding protein LolD (228 aa).

One can recognise an ABC transporter domain in the interval 7–227; sequence LQLSGIERHY…TIEDGKVVEL (221 aa). 43–50 lines the ATP pocket; that stretch reads APSGTGKS.

The protein belongs to the ABC transporter superfamily. Lipoprotein translocase (TC 3.A.1.125) family. As to quaternary structure, the complex is composed of two ATP-binding proteins (LolD) and two transmembrane proteins (LolC and LolE).

The protein resides in the cell inner membrane. Part of the ABC transporter complex LolCDE involved in the translocation of mature outer membrane-directed lipoproteins, from the inner membrane to the periplasmic chaperone, LolA. Responsible for the formation of the LolA-lipoprotein complex in an ATP-dependent manner. This Rhizobium meliloti (strain 1021) (Ensifer meliloti) protein is Lipoprotein-releasing system ATP-binding protein LolD.